The sequence spans 124 residues: Small ribosomal subunit protein uS12 (124 aa).

Residues 1-22 (MATINQLVRKPRSRKVAKSDVP) form a disordered region. A 3-methylthioaspartic acid modification is found at Asp-89. Positions 104–124 (TAGVNDRRQGRSKYGAKRGKS) are disordered. The span at 113–124 (GRSKYGAKRGKS) shows a compositional bias: basic residues.

It belongs to the universal ribosomal protein uS12 family. As to quaternary structure, part of the 30S ribosomal subunit. Contacts proteins S8 and S17. May interact with IF1 in the 30S initiation complex.

Functionally, with S4 and S5 plays an important role in translational accuracy. Interacts with and stabilizes bases of the 16S rRNA that are involved in tRNA selection in the A site and with the mRNA backbone. Located at the interface of the 30S and 50S subunits, it traverses the body of the 30S subunit contacting proteins on the other side and probably holding the rRNA structure together. The combined cluster of proteins S8, S12 and S17 appears to hold together the shoulder and platform of the 30S subunit. This Hahella chejuensis (strain KCTC 2396) protein is Small ribosomal subunit protein uS12.